Here is a 299-residue protein sequence, read N- to C-terminus: HTH-type transcriptional repressor CarH (299 aa).

The HTH merR-type domain occupies 5–74 (TYRINIAAEL…ISEAAKLLPQ (70 aa)). Positions 8-27 (INIAAELAGVRVELIRAWER) form a DNA-binding region, H-T-H motif. Residues 180-299 (HRHGVLACFP…EEDWDRLAGT (120 aa)) enclose the B12-binding domain.

Belongs to the CarA/CarH B12-binding photoregulator family. In terms of assembly, forms oligomers. Interacts with CarS.

Requires cobalamin (vitamin B12) for repressor activity. In the dark, binding of cobalamin to CarH induces its oligomerization, which enhances binding to the DNA and repressor activity. Light causes cobalamin photolysis and disruption of the cobalamin-CarH complex, which decreases interaction with DNA and allows transcription of the carB operon. Interaction with CarS also prevents binding to DNA. Negative regulator of the carB operon in the dark. Binds specifically to the CarA operator, in the region around the carB promoter, which blocks access to the RNA polymerase. This Myxococcus xanthus protein is HTH-type transcriptional repressor CarH (carH).